Reading from the N-terminus, the 187-residue chain is Elongation factor P (187 aa).

This sequence belongs to the elongation factor P family.

It is found in the cytoplasm. It participates in protein biosynthesis; polypeptide chain elongation. In terms of biological role, involved in peptide bond synthesis. Stimulates efficient translation and peptide-bond synthesis on native or reconstituted 70S ribosomes in vitro. Probably functions indirectly by altering the affinity of the ribosome for aminoacyl-tRNA, thus increasing their reactivity as acceptors for peptidyl transferase. This is Elongation factor P from Sphingopyxis alaskensis (strain DSM 13593 / LMG 18877 / RB2256) (Sphingomonas alaskensis).